We begin with the raw amino-acid sequence, 167 residues long: Small heat shock protein C1 (167 aa).

Residues 59-167 (SLYESNSIKS…EQEAREIVID (109 aa)) enclose the sHSP domain.

Belongs to the small heat shock protein (HSP20) family.

The protein is Small heat shock protein C1 (hspC1) of Rickettsia conorii (strain ATCC VR-613 / Malish 7).